The following is a 175-amino-acid chain: Heme-dependent oxidative N-demethylase delta subunit (175 aa).

As to quaternary structure, the heme-dependent oxidative N-demethylase (HODM) is a heterotetramer composed of a catalytic alpha subunit, a FMN/2Fe-2S-dependent oxidoreductase beta subunit, a gamma subunit with putative aminotransferase activity, and a delta subunit of unknown function.

Component of the heme-dependent oxidative N-demethylase (HODM) enzyme, that catalyzes the NADPH-dependent oxidation of dimethylamine (DMA) to methylamine (MA) and formaldehyde. Functions in bacterial methylated amine catabolism, linking alkylamine oxidation to the tetrahydrofolate C1 pool. The function of the delta subunit is unknown. The protein is Heme-dependent oxidative N-demethylase delta subunit of Ectopseudomonas mendocina (strain ymp) (Pseudomonas mendocina).